Consider the following 225-residue polypeptide: Ribonuclease 3 (225 aa).

An RNase III domain is found at isoleucine 7–aspartate 129. Glutamate 42 is a Mg(2+) binding site. The active site involves aspartate 46. Mg(2+) contacts are provided by aspartate 115 and glutamate 118. The active site involves glutamate 118. A DRBM domain is found at aspartate 155–arginine 225.

Belongs to the ribonuclease III family. Homodimer. Mg(2+) is required as a cofactor.

It is found in the cytoplasm. It carries out the reaction Endonucleolytic cleavage to 5'-phosphomonoester.. Its function is as follows. Digests double-stranded RNA. Involved in the processing of primary rRNA transcript to yield the immediate precursors to the large and small rRNAs (23S and 16S). Processes some mRNAs, and tRNAs when they are encoded in the rRNA operon. Processes pre-crRNA and tracrRNA of type II CRISPR loci if present in the organism. This chain is Ribonuclease 3, found in Shewanella woodyi (strain ATCC 51908 / MS32).